Reading from the N-terminus, the 281-residue chain is Survival motor neuron protein 1 (281 aa).

Disordered regions lie at residues 1-20 and 42-77; these read MANG…SDDS and ALKG…NAAP. A Phosphothreonine modification is found at T14. Phosphoserine occurs at positions 17 and 20. Positions 59-73 are enriched in basic residues; the sequence is KKRKNNKKNKSRKRC. Residues 80–140 form the Tudor domain; the sequence is EWQVGDSCYA…LTEPPDMDED (61 aa). Basic and acidic residues predominate over residues 145-159; sequence ANVKETESSTEESDR. The interval 145–242 is disordered; it reads ANVKETESST…PMSPDFGEDD (98 aa). 2 stretches are compositionally biased toward pro residues: residues 179–197 and 212–235; these read MGPP…PPPP and PSFP…PPMS. The segment at 225 to 252 is P2 (binding site for SNRPB); that stretch reads PPMIPPPPPMSPDFGEDDEALGSMLISW. Residues 264–279 are required for interaction with SYNCRIP; sequence GLRQGRKEAAASKKSH.

The protein belongs to the SMN family. Homodimer. Component of an import snRNP complex composed of kpnb1, rnut1, smn1 and znf259. Part of the core SMN complex that contains smn1, gemin2/sip1, ddx20/gemin3, gemin4, gemin5, gemin6, gemin7, gemin8 and strap/unrip. Interacts with ddx20, fbl, nola1, rnut1, syncrip and with several spliceosomal snRNP core Sm proteins, including snrpb, snrpd1, snrpd2, snrpd3, snrpe and ilf3. Interacts with elavl4.

It localises to the nucleus. It is found in the gem. The protein resides in the cajal body. The protein localises to the cytoplasm. Its subcellular location is the cytoplasmic granule. It localises to the perikaryon. It is found in the cell projection. The protein resides in the neuron projection. The protein localises to the myofibril. Its subcellular location is the sarcomere. It localises to the z line. In terms of biological role, the SMN complex plays an essential role in spliceosomal snRNP assembly in the cytoplasm and is required for pre-mRNA splicing in the nucleus. It may also play a role in the metabolism of snoRNPs. Required in motor neurons and proprioceptive neurons to ensure correct U12 intron splicing and proper levels of tmem41b mRNA. Required for the maturation of motor neuron axonal branches and dendrites. This Danio rerio (Zebrafish) protein is Survival motor neuron protein 1 (smn1).